The sequence spans 111 residues: Disintegrin piscivostatin-alpha (111 aa).

A signal peptide spans 1-20 (MIQVLLVTICLAVFPYQGSS). Positions 21–44 (IILESGNVNDYEVVYPRKITPLPK) are excised as a propeptide. In terms of domain architecture, Disintegrin spans 45–111 (GAVQPKNPCC…GDCPRKHFYA (67 aa)). 4 disulfide bridges follow: Cys53–Cys76, Cys67–Cys73, Cys72–Cys97, and Cys85–Cys104. The short motif at 89–91 (RGD) is the Cell attachment site element. Positions 110–111 (YA) are excised as a propeptide.

Belongs to the disintegrin family. Dimeric disintegrin subfamily. In terms of assembly, heterodimer with piscivostatin-beta; disulfide-linked. As to expression, expressed by the venom gland.

The protein resides in the secreted. Its function is as follows. Inhibits fibrinogen interaction with platelets. Acts by binding to alpha-IIb/beta-3 (ITGA2B/ITGB3) on the platelet surface and inhibits both ADP-induced platelet aggregation and platelet aggregate dissociation in human platelet-rich plasma. The protein is Disintegrin piscivostatin-alpha of Agkistrodon piscivorus piscivorus (Eastern cottonmouth).